A 296-amino-acid polypeptide reads, in one-letter code: Hca operon transcriptional activator HcaR (296 aa).

Residues 1–58 (MELRHLRYFVAVAQALNFTRAAEKLHTSQPSLSSQIRDLENCVGVPLLVRDKRKVALT) enclose the HTH lysR-type domain. Residues 18-38 (FTRAAEKLHTSQPSLSSQIRD) constitute a DNA-binding region (H-T-H motif).

Belongs to the LysR transcriptional regulatory family.

Functionally, transcriptional activator of the hca operon for 3-phenylpropionic acid catabolism. The sequence is that of Hca operon transcriptional activator HcaR (hcaR) from Escherichia coli (strain K12).